A 347-amino-acid polypeptide reads, in one-letter code: BSD domain-containing protein C22A12.14c (347 aa).

2 positions are modified to phosphothreonine: threonine 123 and threonine 125. The BSD domain occupies 167–219 (WEKEISIDGKTEEISLLLEEYPDLRKQMESLVPSEVSYDDFWKRFFWHKEVVQ). The tract at residues 229-347 (DEEEIFSWGD…DDDEDDDDWE (119 aa)) is disordered. Serine 235, serine 241, and serine 246 each carry phosphoserine. Acidic residues predominate over residues 240-251 (RSDEEESDNEQV). The span at 297-312 (HDGEVDGEVKEEEENK) shows a compositional bias: basic and acidic residues. Residues 313 to 325 (VSSSSNIEASQSS) show a composition bias toward low complexity. Over residues 327 to 337 (EVKDEANRKVD) the composition is skewed to basic and acidic residues. A compositionally biased stretch (acidic residues) spans 338 to 347 (DDDEDDDDWE).

The protein localises to the cytoplasm. In Schizosaccharomyces pombe (strain 972 / ATCC 24843) (Fission yeast), this protein is BSD domain-containing protein C22A12.14c.